A 203-amino-acid polypeptide reads, in one-letter code: GTP cyclohydrolase-2 (203 aa).

49–53 (RIHSE) is a binding site for GTP. Zn(2+)-binding residues include Cys54, Cys65, and Cys67. Residues Gln70, 92 to 94 (EGR), and Thr114 contribute to the GTP site. Asp126 serves as the catalytic Proton acceptor. The active-site Nucleophile is the Arg128. GTP is bound by residues Thr149 and Lys154.

This sequence belongs to the GTP cyclohydrolase II family. Zn(2+) is required as a cofactor.

It catalyses the reaction GTP + 4 H2O = 2,5-diamino-6-hydroxy-4-(5-phosphoribosylamino)-pyrimidine + formate + 2 phosphate + 3 H(+). Its pathway is cofactor biosynthesis; riboflavin biosynthesis; 5-amino-6-(D-ribitylamino)uracil from GTP: step 1/4. Its function is as follows. Catalyzes the conversion of GTP to 2,5-diamino-6-ribosylamino-4(3H)-pyrimidinone 5'-phosphate (DARP), formate and pyrophosphate. The polypeptide is GTP cyclohydrolase-2 (Shewanella sp. (strain MR-7)).